We begin with the raw amino-acid sequence, 352 residues long: Photosystem II D2 protein (352 aa).

At 1-31 the chain is on the cytoplasmic side; that stretch reads MTIAIGRAPAERGWFDILDDWLKRDRFVFVG. The chain crosses the membrane as a helical span at residues 32-53; the sequence is WSGILLFPCAYLALGGWLTGTT. Residues 54 to 108 are Lumenal-facing; that stretch reads FVTSWYTHGLASSYLEGCNFLTVAVSTPANSMGHSLLLLWGPEAQGDFTRWCQLG. The helical transmembrane segment at 109-131 threads the bilayer; that stretch reads GLWTFIALHGAFGLIGFMLRQFE. A chlorophyll a-binding site is contributed by His-117. Residue Gln-129 participates in pheophytin a binding. The Cytoplasmic portion of the chain corresponds to 132–140; that stretch reads IARLVGVRP. Residues 141 to 160 form a helical membrane-spanning segment; it reads YNAIAFSAPIAVFVSVFLIY. Asn-142 lines the pheophytin a pocket. The Lumenal portion of the chain corresponds to 161–193; that stretch reads PLGQSSWFFAPSFGVAAIFRFLLFFQGFHNWTL. The helical transmembrane segment at 194–217 threads the bilayer; sequence NPFHMMGVAGVLGGALLCAIHGAT. His-197 provides a ligand contact to chlorophyll a. 2 residues coordinate a plastoquinone: His-214 and Phe-261. His-214 serves as a coordination point for Fe cation. At 218 to 265 the chain is on the cytoplasmic side; it reads VENTLFQDGEGASTFRAFNPTQAEETYSMVTANRFWSQIFGIAFSNKR. A helical membrane pass occupies residues 266–288; the sequence is WLHFFMLFVPVTGLWMSAIGVVG. His-268 is a Fe cation binding site. Topologically, residues 289-352 are lumenal; it reads LALNLRSYDF…EEVLPRGNAL (64 aa).

This sequence belongs to the reaction center PufL/M/PsbA/D family. As to quaternary structure, PSII is composed of 1 copy each of membrane proteins PsbA, PsbB, PsbC, PsbD, PsbE, PsbF, PsbH, PsbI, PsbJ, PsbK, PsbL, PsbM, PsbT, PsbX, PsbY, PsbZ, Psb30/Ycf12, peripheral proteins PsbO, CyanoQ (PsbQ), PsbU, PsbV and a large number of cofactors. It forms dimeric complexes. Part of a photosystem II (PSII) assembly intermediate complex PSII-I; crystallized from a strain deleted of psbJ, it forms monomeric PSII before addition of the oxygen evolving complex. PSII-I includes 3 assembly factors not found in mature PSII (Psb27, Psb28 and Psb34). The cofactor is The D1/D2 heterodimer binds P680, chlorophylls that are the primary electron donor of PSII, and subsequent electron acceptors. It shares a non-heme iron and each subunit binds pheophytin, quinone, additional chlorophylls, carotenoids and lipids. There is also a Cl(-1) ion associated with D1 and D2, which is required for oxygen evolution. PSII binds additional chlorophylls, carotenoids and specific lipids..

It localises to the cellular thylakoid membrane. The enzyme catalyses 2 a plastoquinone + 4 hnu + 2 H2O = 2 a plastoquinol + O2. Photosystem II (PSII) is a light-driven water:plastoquinone oxidoreductase that uses light energy to abstract electrons from H(2)O, generating O(2) and a proton gradient subsequently used for ATP formation. It consists of a core antenna complex that captures photons, and an electron transfer chain that converts photonic excitation into a charge separation. The D1/D2 (PsbA/PsbD) reaction center heterodimer binds P680, the primary electron donor of PSII as well as several subsequent electron acceptors. D2 is needed for assembly of a stable PSII complex. The chain is Photosystem II D2 protein from Thermosynechococcus vestitus (strain NIES-2133 / IAM M-273 / BP-1).